The primary structure comprises 275 residues: Hydroxyethylthiazole kinase (275 aa).

Met-57 provides a ligand contact to substrate. Residues Arg-132 and Ser-178 each contribute to the ATP site. Gly-205 lines the substrate pocket.

This sequence belongs to the Thz kinase family. Mg(2+) serves as cofactor.

The catalysed reaction is 5-(2-hydroxyethyl)-4-methylthiazole + ATP = 4-methyl-5-(2-phosphooxyethyl)-thiazole + ADP + H(+). It participates in cofactor biosynthesis; thiamine diphosphate biosynthesis; 4-methyl-5-(2-phosphoethyl)-thiazole from 5-(2-hydroxyethyl)-4-methylthiazole: step 1/1. In terms of biological role, catalyzes the phosphorylation of the hydroxyl group of 4-methyl-5-beta-hydroxyethylthiazole (THZ). The sequence is that of Hydroxyethylthiazole kinase from Clavibacter sepedonicus (Clavibacter michiganensis subsp. sepedonicus).